We begin with the raw amino-acid sequence, 327 residues long: uncharacterized protein (327 aa).

In terms of domain architecture, S4 RNA-binding spans M12–D84. D137 is a catalytic residue.

The protein belongs to the pseudouridine synthase RluA family.

The enzyme catalyses a uridine in RNA = a pseudouridine in RNA. This is an uncharacterized protein from Chlorobaculum parvum (strain DSM 263 / NCIMB 8327) (Chlorobium vibrioforme subsp. thiosulfatophilum).